We begin with the raw amino-acid sequence, 321 residues long: MLNNEYKNSSMKIFSLKGNEPLAQEVADHVGIELGKCSVKRFSDGEIQINIEESIRGCDVFIVQPTSYPVNLHLMELLIMIDACKRASAANINIVVPYYGYARQDRKARSREPITAKLVANLIETAGANRMIALDLHAPQIQGFFDIPIDHLMGVPILAQHFENDPDINPEECVVVSPDHGGVTRARKLADILKTPIAIIDKRRPKPNVAEVMNIVGDIEGRTAIIIDDIIDTAGTITLAAQALKDKGAKEVYACCTHPVLSGPAKERIENSAIKQLIVTNSIQLEENRKPNNTKELSVAGLIAKAIIRVYERESVSVLFD.

ATP contacts are provided by residues 44-46 and 103-104; these read DGE and RQ. Mg(2+) contacts are provided by His-137 and Asp-179. The active site involves Lys-202. Residues Arg-204, Asp-228, and 232–236 contribute to the D-ribose 5-phosphate site; that span reads DTAGT.

It belongs to the ribose-phosphate pyrophosphokinase family. Class I subfamily. In terms of assembly, homohexamer. The cofactor is Mg(2+).

It localises to the cytoplasm. It carries out the reaction D-ribose 5-phosphate + ATP = 5-phospho-alpha-D-ribose 1-diphosphate + AMP + H(+). It functions in the pathway metabolic intermediate biosynthesis; 5-phospho-alpha-D-ribose 1-diphosphate biosynthesis; 5-phospho-alpha-D-ribose 1-diphosphate from D-ribose 5-phosphate (route I): step 1/1. Its function is as follows. Involved in the biosynthesis of the central metabolite phospho-alpha-D-ribosyl-1-pyrophosphate (PRPP) via the transfer of pyrophosphoryl group from ATP to 1-hydroxyl of ribose-5-phosphate (Rib-5-P). In Staphylococcus epidermidis (strain ATCC 35984 / DSM 28319 / BCRC 17069 / CCUG 31568 / BM 3577 / RP62A), this protein is Ribose-phosphate pyrophosphokinase.